The sequence spans 363 residues: NAD(P)H-quinone oxidoreductase subunit 1, chloroplastic (363 aa).

The next 6 membrane-spanning stretches (helical) occupy residues 30–50 (LVPILTLVLGITIGVLVIVWL), 98–118 (FSIGPAIAVISILLSFSVIPF), 129–149 (IGIFLWIAISSIAPVGLLMSG), 248–268 (YSGIKFGLFYVASYLNLLLSS), 300–320 (IIGTTIGIFITLAKTYLFLFI), and 343–363 (FLLPISLGNLLLTTSFQLLSL).

The protein belongs to the complex I subunit 1 family. In terms of assembly, NDH is composed of at least 16 different subunits, 5 of which are encoded in the nucleus.

The protein resides in the plastid. Its subcellular location is the chloroplast thylakoid membrane. The enzyme catalyses a plastoquinone + NADH + (n+1) H(+)(in) = a plastoquinol + NAD(+) + n H(+)(out). It catalyses the reaction a plastoquinone + NADPH + (n+1) H(+)(in) = a plastoquinol + NADP(+) + n H(+)(out). In terms of biological role, NDH shuttles electrons from NAD(P)H:plastoquinone, via FMN and iron-sulfur (Fe-S) centers, to quinones in the photosynthetic chain and possibly in a chloroplast respiratory chain. The immediate electron acceptor for the enzyme in this species is believed to be plastoquinone. Couples the redox reaction to proton translocation, and thus conserves the redox energy in a proton gradient. The chain is NAD(P)H-quinone oxidoreductase subunit 1, chloroplastic from Gossypium hirsutum (Upland cotton).